A 262-amino-acid chain; its full sequence is Hemin import ATP-binding protein HmuV (262 aa).

An ABC transporter domain is found at 3 to 244; it reads LQARNLTLAR…DHMRRVYGIE (242 aa). Position 35–42 (35–42) interacts with ATP; that stretch reads GANGAGKS.

This sequence belongs to the ABC transporter superfamily. Heme (hemin) importer (TC 3.A.1.14.5) family. In terms of assembly, the complex is composed of two ATP-binding proteins (HmuV), two transmembrane proteins (HmuU) and a solute-binding protein (HmuT).

It is found in the cell inner membrane. Part of the ABC transporter complex HmuTUV involved in hemin import. Responsible for energy coupling to the transport system. The chain is Hemin import ATP-binding protein HmuV from Bordetella bronchiseptica (strain ATCC BAA-588 / NCTC 13252 / RB50) (Alcaligenes bronchisepticus).